The sequence spans 228 residues: NADH-quinone oxidoreductase subunit C (228 aa).

It belongs to the complex I 30 kDa subunit family. As to quaternary structure, NDH-1 is composed of 14 different subunits. Subunits NuoB, C, D, E, F, and G constitute the peripheral sector of the complex.

It localises to the cell membrane. The catalysed reaction is a quinone + NADH + 5 H(+)(in) = a quinol + NAD(+) + 4 H(+)(out). NDH-1 shuttles electrons from NADH, via FMN and iron-sulfur (Fe-S) centers, to quinones in the respiratory chain. The immediate electron acceptor for the enzyme in this species is believed to be a menaquinone. Couples the redox reaction to proton translocation (for every two electrons transferred, four hydrogen ions are translocated across the cytoplasmic membrane), and thus conserves the redox energy in a proton gradient. The polypeptide is NADH-quinone oxidoreductase subunit C (Mycobacteroides abscessus (strain ATCC 19977 / DSM 44196 / CCUG 20993 / CIP 104536 / JCM 13569 / NCTC 13031 / TMC 1543 / L948) (Mycobacterium abscessus)).